Reading from the N-terminus, the 95-residue chain is Aspartyl/glutamyl-tRNA(Asn/Gln) amidotransferase subunit C (95 aa).

The protein belongs to the GatC family. In terms of assembly, heterotrimer of A, B and C subunits.

It catalyses the reaction L-glutamyl-tRNA(Gln) + L-glutamine + ATP + H2O = L-glutaminyl-tRNA(Gln) + L-glutamate + ADP + phosphate + H(+). It carries out the reaction L-aspartyl-tRNA(Asn) + L-glutamine + ATP + H2O = L-asparaginyl-tRNA(Asn) + L-glutamate + ADP + phosphate + 2 H(+). Functionally, allows the formation of correctly charged Asn-tRNA(Asn) or Gln-tRNA(Gln) through the transamidation of misacylated Asp-tRNA(Asn) or Glu-tRNA(Gln) in organisms which lack either or both of asparaginyl-tRNA or glutaminyl-tRNA synthetases. The reaction takes place in the presence of glutamine and ATP through an activated phospho-Asp-tRNA(Asn) or phospho-Glu-tRNA(Gln). In Chlorobium luteolum (strain DSM 273 / BCRC 81028 / 2530) (Pelodictyon luteolum), this protein is Aspartyl/glutamyl-tRNA(Asn/Gln) amidotransferase subunit C.